The primary structure comprises 322 residues: tRNA U34 carboxymethyltransferase (322 aa).

Carboxy-S-adenosyl-L-methionine contacts are provided by residues Lys90, Trp104, Lys109, Gly129, 151–153 (DPS), 180–181 (IE), Met196, Tyr200, and Arg315.

It belongs to the class I-like SAM-binding methyltransferase superfamily. CmoB family. In terms of assembly, homotetramer.

The enzyme catalyses carboxy-S-adenosyl-L-methionine + 5-hydroxyuridine(34) in tRNA = 5-carboxymethoxyuridine(34) in tRNA + S-adenosyl-L-homocysteine + H(+). Functionally, catalyzes carboxymethyl transfer from carboxy-S-adenosyl-L-methionine (Cx-SAM) to 5-hydroxyuridine (ho5U) to form 5-carboxymethoxyuridine (cmo5U) at position 34 in tRNAs. The chain is tRNA U34 carboxymethyltransferase from Cellvibrio japonicus (strain Ueda107) (Pseudomonas fluorescens subsp. cellulosa).